A 267-amino-acid polypeptide reads, in one-letter code: Small ribosomal subunit protein uS2 (267 aa).

A disordered region spans residues 224 to 244; that stretch reads GRQGEDEDVTEDSFKDNKDAK. The span at 235 to 244 shows a compositional bias: basic and acidic residues; it reads DSFKDNKDAK.

It belongs to the universal ribosomal protein uS2 family.

The protein is Small ribosomal subunit protein uS2 of Lactiplantibacillus plantarum (strain ATCC BAA-793 / NCIMB 8826 / WCFS1) (Lactobacillus plantarum).